The primary structure comprises 348 residues: MSKQTLVLLYGGRSAEREVSVLSAESVMRAVNYDKFLVKTYFITQMGQFIKTQQFSEKPSESERLMTNETIELTQKIKPSDIYEEGAVVFPVLHGPMGEDGSIQGFLEVLRMPYIGTNVMSSSIAMDKITTKRVLESIGIPQVAYTVYIDGQDLEACLVETLARLTFPIFVKPANMGSSVGISKAQTKVELRKAIQLALTYDSRVLIEQGVVAREIEVGLLGNDKVKSTLPGEVIKDVDFYDYQAKYVDNKITMAIPADVDQSIVTEMRSYAEVAFKALGGCGLSRCDFFLTQDGQVYLNELNTMPGFTQWSMYPLLWENMGLAYPDLIEELVTLAQEIFDQRESHLI.

One can recognise an ATP-grasp domain in the interval 132–334 (KRVLESIGIP…YPDLIEELVT (203 aa)). Residue 162-217 (LARLTFPIFVKPANMGSSVGISKAQTKVELRKAIQLALTYDSRVLIEQGVVAREIE) participates in ATP binding. Residues Asp288, Glu301, and Asn303 each contribute to the Mg(2+) site.

Belongs to the D-alanine--D-alanine ligase family. Mg(2+) is required as a cofactor. It depends on Mn(2+) as a cofactor.

Its subcellular location is the cytoplasm. The enzyme catalyses 2 D-alanine + ATP = D-alanyl-D-alanine + ADP + phosphate + H(+). It participates in cell wall biogenesis; peptidoglycan biosynthesis. Its function is as follows. Cell wall formation. The protein is D-alanine--D-alanine ligase of Streptococcus pyogenes serotype M3 (strain SSI-1).